The primary structure comprises 207 residues: LexA repressor (207 aa).

Positions 28 to 48 (VREIGEAVGLASSSTVHGHLS) form a DNA-binding region, H-T-H motif. Catalysis depends on for autocatalytic cleavage activity residues Ser130 and Lys168.

It belongs to the peptidase S24 family. As to quaternary structure, homodimer.

It catalyses the reaction Hydrolysis of Ala-|-Gly bond in repressor LexA.. Its function is as follows. Represses a number of genes involved in the response to DNA damage (SOS response), including recA and lexA. In the presence of single-stranded DNA, RecA interacts with LexA causing an autocatalytic cleavage which disrupts the DNA-binding part of LexA, leading to derepression of the SOS regulon and eventually DNA repair. This Staphylococcus aureus (strain MSSA476) protein is LexA repressor.